The primary structure comprises 380 residues: Ubiquitin-like protein 7 (380 aa).

The 81-residue stretch at 18–98 folds into the Ubiquitin-like domain; the sequence is APKSILRLPE…VLRKSWPEPD (81 aa). The segment at 201–313 is disordered; the sequence is PMPGADSSSR…SSSVQSGTPI (113 aa). The residue at position 230 (serine 230) is a Phosphoserine. 2 stretches are compositionally biased toward low complexity: residues 239–255 and 270–312; these read SARS…RPAS and SELA…SGTP. Residues 333–377 form the UBA domain; it reads SLQSQWQPQLQQLRDMGIQDDELSLRALQATGGDIQAALELIFAG.

As to quaternary structure, binds ubiquitin. Interacts with MAVS; this interaction enhances TRIM21-dependent 'Lys-27'-linked polyubiquitination of MAVS. Post-translationally, deubiquitinated by OTUD4 which stabilizes UBL7 expression.

In terms of biological role, interferon-stimulated protein that positively regulates RNA virus-triggered innate immune signaling. Mechanistically, promotes 'Lys-27'-linked polyubiquitination of MAVS through TRIM21 leading to enhanced the IFN signaling pathway. In Bos taurus (Bovine), this protein is Ubiquitin-like protein 7 (UBL7).